The following is a 1180-amino-acid chain: MITTIPKSINVTTIPLSGKILIEASAGTGKTFSLTILYIRLLLGITNHVKYKKGLLIKEILVVTFTEHTRAELEIRIKTYIKIFKTACIKKYSNNYVLSKLLSKITDFPKTIDILSKAENSIHELSIYTIHGFCYKILKLNKFNSELMLQNKILKHTYPLYLKISIKFWKYYFAFLSLDITSILLEYFNNPKTLLKEILPLLNKTQLISKLTKTKRKNIVQEYYILIKKIKLFKQKWANYSHLIHSEIIKTNVNKRIYTKSNLKRWINNITAWATQKQTKNFFIPSELKYFRYSFIIKKTTSEKILDDKFFKFIDTFLDSKFSLKEIFIIDASLEIKAMFMQEKIKNRYFEYDDLITFCWNMVNKNNFNISQTILKKYPVALIDEFQDTNNKQYNIFKKIYKKENLLILISDPKQAIYSFSGADITSYLQAKSNIKNQYFLDTNWRSSPKIINSINLLFSRLKNPFLTKNITFYPVKSSRINKTTKFEVNGKNQPALRFLLNKNKNISINEYKEWISITTAKYISYWISSGIKGNATITISNKVRTVNFSDIAIIVRNNLEAKTIQLELTKLNIQSLYLTSKNNIFQSKEILEILWILQAILNPNIERLLKRAMSTNIMSKNTKEIISIPNNHSYWIKLSQEFNQYLIFWNNYGILYVIQQLIINYNISNNNNLLHNFSPNIKNILYIGELLEEKSITIKNKFLLINWLKKNITQDFYLTKPKYIKPNYEKNNYIKIVSIHKSKGLEYPITIIPFATITFNKTVSTVEKICFNLNNTKIKKQKTLKIEKHKFSEDIRLLYVALTRSIIHCSIGISLAQTITQKKKIQKEKSKFKINVLRYIIQSGKNHISTKKLYTELSILKKNKNIEIISEIPNIIKKNFQIPTLNTNSQSLMHYQVSRKFNYNYNFTSYSQLKKNIKPSTMYSTLNTKKLFELNVKKKHCFENKILTPHTFPSGKIYGTLLHKILKNISFHKSINSNWLLKKLSEYNLDKRWCLILKNWMYSILYKNLDKNYNLRLSKLDSKNYIKELKFLLPIKKKLTALKLNNIFQTHQCSSLENKLCFHPIQGILSGSIDLVFLWKTKYFLVDYKSNWIGNSNQSYSQQNIKKIIKKHHYNFQLQLYSLVLHRYLKQHIKNYSFYNHFGGTYILFIRSINEIPSQNGIFYSIPNIEIIKKLEQIF.

The DNA-binding and helicase activity, interacts with RecC stretch occupies residues 1–852 (MITTIPKSIN…QSGKNHISTK (852 aa)). The UvrD-like helicase ATP-binding domain occupies 3–448 (TTIPKSINVT…YFLDTNWRSS (446 aa)). 24 to 31 (ASAGTGKT) lines the ATP pocket. One can recognise a UvrD-like helicase C-terminal domain in the interval 478-745 (SSRINKTTKF…KIVSIHKSKG (268 aa)). The segment at 905–1180 (NYNFTSYSQL…EIIKKLEQIF (276 aa)) is nuclease activity, interacts with RecD and RecA. Residues histidine 964, aspartate 1075, and aspartate 1088 each coordinate Mg(2+). Aspartate 1088 functions as the For nuclease activity in the catalytic mechanism.

This sequence belongs to the helicase family. UvrD subfamily. In terms of assembly, heterotrimer of RecB, RecC and RecD. All subunits contribute to DNA-binding. Interacts with RecA. Mg(2+) is required as a cofactor.

The enzyme catalyses Exonucleolytic cleavage (in the presence of ATP) in either 5'- to 3'- or 3'- to 5'-direction to yield 5'-phosphooligonucleotides.. The catalysed reaction is Couples ATP hydrolysis with the unwinding of duplex DNA by translocating in the 3'-5' direction.. It carries out the reaction ATP + H2O = ADP + phosphate + H(+). A helicase/nuclease that prepares dsDNA breaks (DSB) for recombinational DNA repair. Binds to DSBs and unwinds DNA via a highly rapid and processive ATP-dependent bidirectional helicase activity. Unwinds dsDNA until it encounters a Chi (crossover hotspot instigator) sequence from the 3' direction. Cuts ssDNA a few nucleotides 3' to the Chi site. The properties and activities of the enzyme are changed at Chi. The Chi-altered holoenzyme produces a long 3'-ssDNA overhang and facilitates RecA-binding to the ssDNA for homologous DNA recombination and repair. Holoenzyme degrades any linearized DNA that is unable to undergo homologous recombination. In the holoenzyme this subunit contributes ATPase, 3'-5' helicase, exonuclease activity and loads RecA onto ssDNA. This chain is RecBCD enzyme subunit RecB, found in Buchnera aphidicola subsp. Baizongia pistaciae (strain Bp).